Here is a 415-residue protein sequence, read N- to C-terminus: Corticotropin-releasing factor receptor 1 (415 aa).

Positions 1–23 (MGQRPQLRLVKALLLLGLNPVST) are cleaved as a signal peptide. The Extracellular segment spans residues 24–111 (SLQDQQCESL…CQEILNEEKK (88 aa)). 3 cysteine pairs are disulfide-bonded: cysteine 30-cysteine 54, cysteine 44-cysteine 87, and cysteine 68-cysteine 102. Residues asparagine 38, asparagine 45, asparagine 78, asparagine 90, and asparagine 98 are each glycosylated (N-linked (GlcNAc...) asparagine). The important for peptide agonist binding stretch occupies residues 99-108 (YSECQEILNE). Residues 112 to 142 (SKVHYHIAVIINYLGHCISLVALLVAFVLFL) form a helical membrane-spanning segment. At 143 to 149 (RLRSIRC) the chain is on the cytoplasmic side. The chain crosses the membrane as a helical span at residues 150–174 (LRNIIHWNLISAFILRNATWFVVQL). Over 175 to 189 (TVSPEVHQSNVAWCR) the chain is Extracellular. Cysteine 188 and cysteine 258 form a disulfide bridge. Residues 190-218 (LVTAAYNYFHVTNFFWMFGEGCYLHTAIV) traverse the membrane as a helical segment. Residues 219–225 (LTYSTDR) lie on the Cytoplasmic side of the membrane. Residues 226-253 (LRKWMFVCIGWGVPFPIIVAWAIGKLYY) form a helical membrane-spanning segment. The Extracellular segment spans residues 254–269 (DNEKCWFGKRPGVYTD). A helical transmembrane segment spans residues 270-295 (YIYQGPMILVLLINFIFLFNIVRILM). An important for antagonist binding region spans residues 280 to 290 (LLINFIFLFNI). Over 296–306 (TKLRASTTSET) the chain is Cytoplasmic. A Phosphoserine; by PKA modification is found at serine 301. The helical transmembrane segment at 307-331 (IQYRKAVKATLVLLPLLGITYMLFF) threads the bilayer. The Extracellular portion of the chain corresponds to 332–338 (VNPGEDE). A helical membrane pass occupies residues 339–368 (VSRVVFIYFNSFLESFQGFFVSVFYCFLNS). At 369–415 (EVRSAIRKRWRRWQDKHSIRARVARAMSIPTSPTRVSFHSIKQSTAV) the chain is on the cytoplasmic side.

It belongs to the G-protein coupled receptor 2 family. As to quaternary structure, heterodimer; heterodimerizes with GPER1. Interacts (via N-terminal extracellular domain) with CRH and UCN. Interacts with DLG1; this inhibits endocytosis of CRHR1 after agonist binding. Post-translationally, C-terminal Ser or Thr residues may be phosphorylated. Phosphorylation at Ser-301 by PKA prevents maximal coupling to Gq-protein, and thereby negatively regulates downstream signaling. As to expression, detected in brain cortex (at protein level).

The protein resides in the cell membrane. The protein localises to the endosome. In terms of biological role, G-protein coupled receptor for CRH (corticotropin-releasing factor) and UCN (urocortin). Has high affinity for CRH and UCN. Ligand binding causes a conformation change that triggers signaling via guanine nucleotide-binding proteins (G proteins) and down-stream effectors, such as adenylate cyclase. Promotes the activation of adenylate cyclase, leading to increased intracellular cAMP levels. Inhibits the activity of the calcium channel CACNA1H. Required for normal embryonic development of the adrenal gland and for normal hormonal responses to stress. Plays a role in the response to anxiogenic stimuli. This is Corticotropin-releasing factor receptor 1 (Crhr1) from Mus musculus (Mouse).